Here is a 983-residue protein sequence, read N- to C-terminus: ABC transporter A family member 2 (983 aa).

Helical transmembrane passes span phenylalanine 33 to methionine 53, isoleucine 221 to valine 241, isoleucine 279 to phenylalanine 299, phenylalanine 305 to methionine 325, valine 339 to proline 359, and valine 416 to leucine 436. The ABC transporter domain occupies valine 518–serine 763. Residue glycine 564–threonine 571 participates in ATP binding. A disordered region spans residues arginine 963–serine 983.

The protein belongs to the ABC transporter superfamily. ABCA family. CPR flippase (TC 3.A.1.211) subfamily.

The protein localises to the membrane. This chain is ABC transporter A family member 2 (ABCA2), found in Arabidopsis thaliana (Mouse-ear cress).